Consider the following 187-residue polypeptide: Cytochrome b-245 chaperone 1 (187 aa).

Residues 20 to 42 form a helical membrane-spanning segment; the sequence is GIRSWSLLVGILSIGLAAAYYSG. At S168 the chain carries Phosphoserine.

Belongs to the CYBC1 family. Interacts with CYBB; CYBC1 may act as a chaperone stabilizing Cytochrome b-245 heterodimer. In terms of tissue distribution, highly expressed in macrophages, neutrophils and monocytes.

It is found in the endoplasmic reticulum membrane. Functionally, functions as a chaperone necessary for a stable expression of the CYBA and CYBB subunits of the cytochrome b-245 heterodimer. Controls the phagocyte respiratory burst and is essential for innate immunity. This chain is Cytochrome b-245 chaperone 1, found in Homo sapiens (Human).